A 183-amino-acid chain; its full sequence is Protein FAM180B (183 aa).

Positions 1-23 are cleaved as a signal peptide; that stretch reads MAATLQFLVCLVVAICLLSGVTT.

Belongs to the FAM180 family.

The protein resides in the secreted. This Homo sapiens (Human) protein is Protein FAM180B (FAM180B).